The following is a 468-amino-acid chain: Protein NEN1 (468 aa).

Residues 11-172 form the Exonuclease domain; the sequence is FFDVETTVPK…DDVRMNLEVL (162 aa). Aspartate 13 and glutamate 15 together coordinate Mg(2+). The Proton donor/acceptor role is filled by histidine 159. Aspartate 164 is a Mg(2+) binding site.

Requires Mg(2+) as cofactor. As to expression, expressed in the sieve elements and phloem pole pericycle cells.

The protein localises to the cytoplasm. The protein resides in the nucleus. Probable exonuclease involved in enuclation of sieve elements. The chain is Protein NEN1 from Arabidopsis thaliana (Mouse-ear cress).